Reading from the N-terminus, the 273-residue chain is Cyclic di-AMP synthase CdaA (273 aa).

3 helical membrane passes run 12–32, 40–60, and 61–81; these read LGNAVDILLVWYVIYKLIMVI, LLKGIVVIVLVRMASQYLGLS, and TLQWLMDQAITWGFLAIIIIF. The region spanning 82-242 is the DAC domain; it reads QPELRRALEQ…NGDLHRELTE (161 aa).

This sequence belongs to the adenylate cyclase family. DacA/CdaA subfamily. In terms of assembly, probably a homodimer. Interacts with CdaR. May interact with GlmM.

Its subcellular location is the cell membrane. The catalysed reaction is 2 ATP = 3',3'-c-di-AMP + 2 diphosphate. DAC activity is stimulated about 20-fold in E.coli by coexpression with CdaR. One of 3 paralogous diadenylate cyclases (DAC) in this bacteria, catalyzing the condensation of 2 ATP molecules into cyclic di-AMP (c-di-AMP). Upon expression in E.coli leads to c-di-AMP synthesis. Probably the main producer of c-di-AMP for the cell; is probably implicated in control of peptidoglycan synthesis. In B.subtilis c-di-AMP is a second messenger that mediates growth, DNA repair and cell wall homeostasis; it is toxic when present in excess. The polypeptide is Cyclic di-AMP synthase CdaA (Bacillus subtilis (strain 168)).